A 357-amino-acid chain; its full sequence is uncharacterized protein (357 aa).

S72 bears the Phosphoserine mark. Disordered regions lie at residues 79 to 98, 264 to 290, and 323 to 357; these read GVNE…RPSR, QKQL…GASV, and ISDE…EPLK. The segment covering 324–335 has biased composition (acidic residues); sequence SDEDEEDEEEDS.

This is an uncharacterized protein from Saccharomyces cerevisiae (strain ATCC 204508 / S288c) (Baker's yeast).